The sequence spans 508 residues: Photosystem II CP47 reaction center protein (508 aa).

The next 6 membrane-spanning stretches (helical) occupy residues 21–36, 101–115, 140–156, 203–218, 237–252, and 457–472; these read SVHI…WAGS, IVFS…IWHW, GIHL…FGAF, IAAG…FHLS, VLSS…AFVV, and SFAL…HGAR.

This sequence belongs to the PsbB/PsbC family. PsbB subfamily. In terms of assembly, PSII is composed of 1 copy each of membrane proteins PsbA, PsbB, PsbC, PsbD, PsbE, PsbF, PsbH, PsbI, PsbJ, PsbK, PsbL, PsbM, PsbT, PsbX, PsbY, PsbZ, Psb30/Ycf12, at least 3 peripheral proteins of the oxygen-evolving complex and a large number of cofactors. It forms dimeric complexes. Requires Binds multiple chlorophylls. PSII binds additional chlorophylls, carotenoids and specific lipids. as cofactor.

It localises to the plastid. It is found in the chloroplast thylakoid membrane. Its function is as follows. One of the components of the core complex of photosystem II (PSII). It binds chlorophyll and helps catalyze the primary light-induced photochemical processes of PSII. PSII is a light-driven water:plastoquinone oxidoreductase, using light energy to abstract electrons from H(2)O, generating O(2) and a proton gradient subsequently used for ATP formation. The polypeptide is Photosystem II CP47 reaction center protein (Lemna minor (Common duckweed)).